The following is a 122-amino-acid chain: Large ribosomal subunit protein uL14 (122 aa).

This sequence belongs to the universal ribosomal protein uL14 family. In terms of assembly, part of the 50S ribosomal subunit. Forms a cluster with proteins L3 and L19. In the 70S ribosome, L14 and L19 interact and together make contacts with the 16S rRNA in bridges B5 and B8.

Functionally, binds to 23S rRNA. Forms part of two intersubunit bridges in the 70S ribosome. The sequence is that of Large ribosomal subunit protein uL14 from Mesorhizobium japonicum (strain LMG 29417 / CECT 9101 / MAFF 303099) (Mesorhizobium loti (strain MAFF 303099)).